Consider the following 231-residue polypeptide: Two-component response regulator ORR1 (231 aa).

The region spanning 9 to 135 (RVLLVDDSPV…DVQRLRKCSP (127 aa)) is the Response regulatory domain. D68 carries the post-translational modification 4-aspartylphosphate.

It belongs to the ARR family. Type-A subfamily. Post-translationally, two-component system major event consists of a His-to-Asp phosphorelay between a sensor histidine kinase (HK) and a response regulator (RR). In plants, the His-to-Asp phosphorelay involves an additional intermediate named Histidine-containing phosphotransfer protein (HPt). This multistep phosphorelay consists of a His-Asp-His-Asp sequential transfer of a phosphate group between first a His and an Asp of the HK protein, followed by the transfer to a conserved His of the HPt protein and finally the transfer to an Asp in the receiver domain of the RR protein. As to expression, expressed in mature leaves and flowers, and at low levels in roots and shoots.

Its function is as follows. Functions as a response regulator involved in His-to-Asp phosphorelay signal transduction system. Phosphorylation of the Asp residue in the receiver domain activates the ability of the protein to promote the transcription of target genes. Type-A response regulators seem to act as negative regulators of the cytokinin signaling. The sequence is that of Two-component response regulator ORR1 from Oryza sativa subsp. indica (Rice).